The sequence spans 294 residues: Deubiquitinase OTUD6B (294 aa).

Disordered regions lie at residues Met-1–Leu-46 and Ala-67–Glu-120. Composition is skewed to polar residues over residues Lys-27–Pro-36 and Pro-73–Thr-86. A compositionally biased stretch (basic and acidic residues) spans Lys-111–Glu-120. Positions Leu-150–Leu-287 constitute an OTU domain. A cys-loop region spans residues Ile-155 to Cys-161. Asp-158 is an active-site residue. The active-site Nucleophile is the Cys-161. The tract at residues Ile-222–Leu-232 is variable-loop. Residues Tyr-270–His-280 form a his-loop region. His-280 is an active-site residue.

The catalysed reaction is Thiol-dependent hydrolysis of ester, thioester, amide, peptide and isopeptide bonds formed by the C-terminal Gly of ubiquitin (a 76-residue protein attached to proteins as an intracellular targeting signal).. Deubiquitinating enzyme that may play a role in the ubiquitin-dependent regulation of different cellular processes. The chain is Deubiquitinase OTUD6B (otud6b) from Xenopus tropicalis (Western clawed frog).